Reading from the N-terminus, the 337-residue chain is tRNA N6-adenosine threonylcarbamoyltransferase (337 aa).

Residues His-111 and His-115 each coordinate Fe cation. Substrate contacts are provided by residues 134-138, Asp-167, Gly-180, and Asn-272; that span reads LVSGG. Residue Asp-300 participates in Fe cation binding.

This sequence belongs to the KAE1 / TsaD family. Fe(2+) serves as cofactor.

It is found in the cytoplasm. It catalyses the reaction L-threonylcarbamoyladenylate + adenosine(37) in tRNA = N(6)-L-threonylcarbamoyladenosine(37) in tRNA + AMP + H(+). Required for the formation of a threonylcarbamoyl group on adenosine at position 37 (t(6)A37) in tRNAs that read codons beginning with adenine. Is involved in the transfer of the threonylcarbamoyl moiety of threonylcarbamoyl-AMP (TC-AMP) to the N6 group of A37, together with TsaE and TsaB. TsaD likely plays a direct catalytic role in this reaction. This chain is tRNA N6-adenosine threonylcarbamoyltransferase, found in Shewanella loihica (strain ATCC BAA-1088 / PV-4).